The following is an 867-amino-acid chain: Translation initiation factor IF-2 (867 aa).

A tr-type G domain is found at 367 to 534 (TRAPVVTIMG…AILLQSEILE (168 aa)). The segment at 376–383 (GHVDHGKT) is G1. 376 to 383 (GHVDHGKT) contacts GTP. The G2 stretch occupies residues 401–405 (GITQN). Residues 422–425 (DTPG) are G3. GTP-binding positions include 422–426 (DTPGH) and 476–479 (NKID). The segment at 476 to 479 (NKID) is G4. Positions 512-514 (SAK) are G5.

The protein belongs to the TRAFAC class translation factor GTPase superfamily. Classic translation factor GTPase family. IF-2 subfamily.

The protein resides in the cytoplasm. Its function is as follows. One of the essential components for the initiation of protein synthesis. Protects formylmethionyl-tRNA from spontaneous hydrolysis and promotes its binding to the 30S ribosomal subunits. Also involved in the hydrolysis of GTP during the formation of the 70S ribosomal complex. The polypeptide is Translation initiation factor IF-2 (Buchnera aphidicola subsp. Schizaphis graminum (strain Sg)).